A 204-amino-acid polypeptide reads, in one-letter code: Recombination protein RecR (204 aa).

The segment at 61–76 adopts a C4-type zinc-finger fold; sequence CARCNTFSETQICSTC. A Toprim domain is found at 84–183; it reads SLLCIVETPA…KVTRIARGIP (100 aa).

Belongs to the RecR family.

Functionally, may play a role in DNA repair. It seems to be involved in an RecBC-independent recombinational process of DNA repair. It may act with RecF and RecO. The sequence is that of Recombination protein RecR from Polynucleobacter asymbioticus (strain DSM 18221 / CIP 109841 / QLW-P1DMWA-1) (Polynucleobacter necessarius subsp. asymbioticus).